We begin with the raw amino-acid sequence, 347 residues long: Tetraacyldisaccharide 4'-kinase (347 aa).

65 to 72 (FVGGTGKT) is an ATP binding site.

Belongs to the LpxK family.

It catalyses the reaction a lipid A disaccharide + ATP = a lipid IVA + ADP + H(+). It participates in glycolipid biosynthesis; lipid IV(A) biosynthesis; lipid IV(A) from (3R)-3-hydroxytetradecanoyl-[acyl-carrier-protein] and UDP-N-acetyl-alpha-D-glucosamine: step 6/6. Transfers the gamma-phosphate of ATP to the 4'-position of a tetraacyldisaccharide 1-phosphate intermediate (termed DS-1-P) to form tetraacyldisaccharide 1,4'-bis-phosphate (lipid IVA). This is Tetraacyldisaccharide 4'-kinase from Janthinobacterium sp. (strain Marseille) (Minibacterium massiliensis).